The primary structure comprises 255 residues: Hydroxyacylglutathione hydrolase (255 aa).

Zn(2+)-binding residues include His-56, His-58, Asp-60, His-61, His-114, Asp-133, and His-171.

It belongs to the metallo-beta-lactamase superfamily. Glyoxalase II family. Monomer. Zn(2+) serves as cofactor.

It catalyses the reaction an S-(2-hydroxyacyl)glutathione + H2O = a 2-hydroxy carboxylate + glutathione + H(+). Its pathway is secondary metabolite metabolism; methylglyoxal degradation; (R)-lactate from methylglyoxal: step 2/2. Thiolesterase that catalyzes the hydrolysis of S-D-lactoyl-glutathione to form glutathione and D-lactic acid. The sequence is that of Hydroxyacylglutathione hydrolase from Roseobacter denitrificans (strain ATCC 33942 / OCh 114) (Erythrobacter sp. (strain OCh 114)).